A 328-amino-acid chain; its full sequence is Putative lipase LIH1 (328 aa).

The Nucleophile role is filled by serine 181. Residues aspartate 253 and histidine 315 each act as charge relay system in the active site.

The protein belongs to the AB hydrolase superfamily. Lipase family.

The catalysed reaction is a triacylglycerol + H2O = a diacylglycerol + a fatty acid + H(+). Its function is as follows. Lipases catalyze the hydrolysis of the ester bond of tri-, di- and monoglycerides of long-chain fatty acids into fatty acids and glycerol. The protein is Putative lipase LIH1 of Saccharomyces cerevisiae (strain ATCC 204508 / S288c) (Baker's yeast).